The chain runs to 162 residues: Inorganic pyrophosphatase (162 aa).

Residue glutamate 8 participates in Mg(2+) binding. Lysine 16, arginine 30, and tyrosine 42 together coordinate substrate. Positions 52, 57, 84, and 89 each coordinate Mg(2+). The Proton acceptor role is filled by aspartate 89. Tyrosine 126 serves as a coordination point for substrate.

Belongs to the PPase family. In terms of assembly, homohexamer. Requires Mg(2+) as cofactor.

It is found in the cytoplasm. It carries out the reaction diphosphate + H2O = 2 phosphate + H(+). Functionally, catalyzes the hydrolysis of inorganic pyrophosphate (PPi) forming two phosphate ions. The protein is Inorganic pyrophosphatase of Mycobacterium bovis (strain ATCC BAA-935 / AF2122/97).